Reading from the N-terminus, the 1204-residue chain is Cingulin (1204 aa).

A head region spans residues 7–359 (MAEPRGPVDH…VMMSSGSSKA (353 aa)). A disordered region spans residues 25-48 (EPVSGAEMGTLRRGGRRPAKDARA). The ZIM motif lies at 48 to 62 (ASTYGVAVRVQGIAG). Residues 54–67 (AVRVQGIAGQPFVV) form an interaction with TJP1/ZO1 region. Residues 68-269 (LNSGEKGGDS…SPLSGLSRAR (202 aa)) are disordered. 8 positions are modified to phosphoserine: Ser-95, Ser-96, Ser-98, Ser-135, Ser-137, Ser-140, Ser-155, and Ser-165. The span at 126–140 (TQWNGKLLRSQSQAS) shows a compositional bias: polar residues. Over residues 166-190 (PGSTIDTAPLSSVDSLINKFDSQLR) the composition is skewed to polar residues. Basic and acidic residues predominate over residues 207–231 (EQRKRSKSLDSRLPRDTLEERERQS). Phosphoserine occurs at positions 214, 217, 260, 278, 340, and 353. The stretch at 360 to 1161 (VAGQGELTRK…SLEKDSWRKA (802 aa)) forms a coiled coil. At Lys-581 the chain carries N6-acetyllysine. The tract at residues 1156-1182 (DSWRKASRSAAESTLKHEGLSSDEEFD) is disordered. The interval 1162–1204 (SRSAAESTLKHEGLSSDEEFDGVYDPSSIASLLTESNLQTSSC) is tail. Phosphoserine is present on residues Ser-1176 and Ser-1177.

This sequence belongs to the cingulin family. As to quaternary structure, homodimer. Interacts with TJP1/ZO1 and SPEF1.

It is found in the cell junction. The protein resides in the tight junction. Its function is as follows. Probably plays a role in the formation and regulation of the tight junction (TJ) paracellular permeability barrier. This chain is Cingulin, found in Callithrix jacchus (White-tufted-ear marmoset).